The sequence spans 279 residues: Large ribosomal subunit protein uL5c (279 aa).

Disordered stretches follow at residues 1–23 (MAATAVTLPSSPAPFPVTTTASS) and 40–63 (LRVAASAAADAPPKPAPPPTSPSG). The N-terminal 43 residues, 1–43 (MAATAVTLPSSPAPFPVTTTASSSRNVRLLLRSPPPRRALRVA), are a transit peptide targeting the chloroplast. Over residues 41–50 (RVAASAAADA) the composition is skewed to low complexity. Over residues 51-60 (PPKPAPPPTS) the composition is skewed to pro residues.

It belongs to the universal ribosomal protein uL5 family. As to quaternary structure, part of the 50S ribosomal subunit; contacts the 5S rRNA.

It localises to the plastid. Its subcellular location is the chloroplast. Its function is as follows. Binds 5S rRNA, forms part of the central protuberance of the 50S subunit. This is Large ribosomal subunit protein uL5c (RPL5) from Oryza sativa subsp. japonica (Rice).